An 859-amino-acid polypeptide reads, in one-letter code: MVSIAFYGGIPGGISTPITQQSEKSKCEENTMFQPYCYNNDSKNSMAESKEARDQEMNLKEESKEEKRRNDWWKIGMFLLCLAGTTGGILWWYEGLPQQHYIGLVAIGGRLNGSGQSNAIECWGSFPGCRPFENYFSYETNRSMHMDNNTATLLEAYHREITFIYKSSCTDSDHCQEYQCKKVNLSSSDSSNSVRVEDVMNTTEYWGFKWLECNQTENFKTILVPENEMVNINDTDTWIPKGCNETWARVKRCPIDILYGIHPIRLCVQPPFFLVQEKGIANTSRIGNCGPTIFLGVLQDNKGVVRGDYTACNVSRLKIDRKDYTGIYQVPIFYTCTFTNITSCNNESIISVIMYETNQVQYLLCNNNNSNNYNCVVQSFGVIGQAHLELPRPNKRIRNQSFNQYNCSINNKTELETWKLVNTSGITPLPISSEANTGLIRHKRDFGISAIVAAIVAATAIAASATMSYVALTEVNKIMEVQNHTFEVENSTLNGMDLIERQIKILYAMILQTHADVQLLKERQQVEETFNLIGCIERTHVFCHTGHPWNMSWGHLNESTQWDDWVSKMEDLNQEILTILHGARNNLAQSMITFNTPDSIAQFGKDLWSHIGNWIPGLGASIIKYIVMFLLIYLLLTSSPKILRALWKVTSGAGSSGSRYLKKKFYHKHASREDTWDQAQHNIHLAGVTGGSGDKYCKQKYSRNDWNGESEEYNRRPKSWVKSIETFGESYISEKTKGEISQPGAAINEHKNGSGRNNPHQGSLDLEIRSEGGNIYDCCIKAQEGTLAIPCCGFPLWLFWGLVIIVGRIAGYGLRGLAVIIRICIRGLNLIFEIIRKMLDYIGRALNPGTSHVSMPQYV.

Positions 1 to 6 (MVSIAF) are excised as a propeptide. Residues 7–614 (YGGIPGGIST…KDLWSHIGNW (608 aa)) lie on the Extracellular side of the membrane. Residues N40, N112, N141, N148, N184, N201, N214, N233, N244, N282, N313, N340, N346, N368, N399, N406, N411, and N422 are each glycosylated (N-linked (GlcNAc...) asparagine; by host). Positions 446–466 (FGISAIVAAIVAATAIAASAT) are fusion peptide. N483 and N490 each carry an N-linked (GlcNAc...) asparagine; by host glycan. Residues 498-513 (LIERQIKILYAMILQT) are immunosuppression. 2 N-linked (GlcNAc...) asparagine; by host glycosylation sites follow: N550 and N557. Coiled-coil stretches lie at residues 576 to 624 (ILTI…SIIK) and 663 to 699 (KKFY…YCKQ). The chain crosses the membrane as a helical span at residues 615–635 (IPGLGASIIKYIVMFLLIYLL). Residues 636-859 (LTSSPKILRA…TSHVSMPQYV (224 aa)) are Cytoplasmic-facing.

As to quaternary structure, the mature envelope protein (Env) consists of a trimer of SU-TM heterodimers attached by noncovalent interactions or by a labile interchain disulfide bond. Post-translationally, specific enzymatic cleavages in vivo yield mature proteins. Envelope glycoproteins are synthesized as an inactive precursor that is N-glycosylated and processed likely by host cell furin or by a furin-like protease in the Golgi to yield the mature SU and TM proteins. The cleavage site between SU and TM requires the minimal sequence [KR]-X-[KR]-R.

The protein localises to the virion membrane. It localises to the host cell membrane. In terms of biological role, the surface protein (SU) attaches the virus to the host cell by binding to its receptor. This interaction triggers the refolding of the transmembrane protein (TM) and is thought to activate its fusogenic potential by unmasking its fusion peptide. Fusion occurs at the host cell plasma membrane. The transmembrane protein (TM) acts as a class I viral fusion protein. Under the current model, the protein has at least 3 conformational states: pre-fusion native state, pre-hairpin intermediate state, and post-fusion hairpin state. During viral and target cell membrane fusion, the coiled coil regions (heptad repeats) assume a trimer-of-hairpins structure, positioning the fusion peptide in close proximity to the C-terminal region of the ectodomain. The formation of this structure appears to drive apposition and subsequent fusion of viral and target cell membranes. Membranes fusion leads to delivery of the nucleocapsid into the cytoplasm. The polypeptide is Envelope glycoprotein (env) (Equus asinus (Donkey)).